Consider the following 416-residue polypeptide: Inositol polyphosphate multikinase (416 aa).

The segment at 1-38 is disordered; that stretch reads MATEPPSPLRVEAPGPPEMRTSPAIESTPEGTPQPAGG. Ala-2 is modified (N-acetylalanine). A Phosphoserine modification is found at Ser-7. An ATP-binding site is contributed by Lys-75. Residue Arg-82 coordinates substrate. Residues 131-133 and Asp-144 contribute to the ATP site; that span reads EDV. Residues Lys-146, 160-167, and Gln-196 contribute to the substrate site; that span reads KIQQQVSK. Positions 320–330 match the Nuclear localization signal motif; the sequence is RHRKIYTKKHH. Asp-385 lines the ATP pocket. His-388 contacts substrate.

This sequence belongs to the inositol phosphokinase (IPK) family. Mg(2+) is required as a cofactor. In terms of tissue distribution, ubiquitous, with the highest expression in skeletal muscle, liver, placenta, lung, peripheral blood leukocytes, kidney, spleen and colon.

The protein resides in the nucleus. It catalyses the reaction 1D-myo-inositol 1,4,5-trisphosphate + 2 ATP = 1D-myo-inositol 1,3,4,5,6-pentakisphosphate + 2 ADP + 2 H(+). The enzyme catalyses 1D-myo-inositol 1,3,4,6-tetrakisphosphate + ATP = 1D-myo-inositol 1,3,4,5,6-pentakisphosphate + ADP + H(+). The catalysed reaction is 1-octadecanoyl-2-(5Z,8Z,11Z,14Z)-eicosatetraenoyl-sn-glycero-3-phospho-1D-myo-inositol 4,5-bisphosphate + ATP = 1-octadecanoyl-2-(5Z,8Z,11Z,14Z-eicosatetraenoyl)-sn-glycero-3-phospho-(1D-myo-inositol 3,4,5-triphosphate) + ADP + H(+). It carries out the reaction a 1,2-diacyl-sn-glycero-3-phospho-(1D-myo-inositol-4,5-bisphosphate) + ATP = a 1,2-diacyl-sn-glycero-3-phospho-(1D-myo-inositol-3,4,5-trisphosphate) + ADP + H(+). It catalyses the reaction 1D-myo-inositol 1,4,5,6-tetrakisphosphate + ATP = 1D-myo-inositol 1,3,4,5,6-pentakisphosphate + ADP + H(+). It functions in the pathway phospholipid metabolism; phosphatidylinositol metabolism. Its activity is regulated as follows. Inhibited by flavonoids that occupy the ATP-binding pocket. Inhibited by myricetin, quercetin, luteolin, kaempferol, isorhamnetin and diosmetin, and to a lesser degree by rhamnetin and apigenin. In terms of biological role, inositol phosphate kinase with a broad substrate specificity. Phosphorylates inositol 1,4,5-trisphosphate (Ins(1,4,5)P3) first to inositol 1,3,4,5-tetrakisphosphate and then to inositol 1,3,4,5,6-pentakisphosphate (Ins(1,3,4,5,6)P5). Phosphorylates inositol 1,3,4,6-tetrakisphosphate (Ins(1,3,4,6)P4). Phosphorylates inositol 1,4,5,6-tetrakisphosphate (Ins(1,4,5,6)P4). Phosphorylates glycero-3-phospho-1D-myo-inositol 4,5-bisphosphate to glycero-3-phospho-1D-myo-inositol 3,4,5-trisphosphate. Plays an important role in MLKL-mediated necroptosis via its role in the biosynthesis of inositol pentakisphosphate (InsP5) and inositol hexakisphosphate (InsP6). Binding of these highly phosphorylated inositol phosphates to MLKL mediates the release of an N-terminal auto-inhibitory region, leading to activation of the kinase. Essential for activated phospho-MLKL to oligomerize and localize to the cell membrane during necroptosis. Required for normal embryonic development, probably via its role in the biosynthesis of inositol 1,3,4,5,6-pentakisphosphate (Ins(1,3,4,5,6)P5) and inositol hexakisphosphate (InsP6). The chain is Inositol polyphosphate multikinase (IPMK) from Homo sapiens (Human).